We begin with the raw amino-acid sequence, 534 residues long: T-complex protein 1 subunit gamma (534 aa).

Position 1 is an N-acetylmethionine (methionine 1). A Phosphoserine modification is found at serine 257. A disulfide bond links cysteine 371 and cysteine 377.

The protein belongs to the TCP-1 chaperonin family. Heterooligomeric complex of about 850 to 900 kDa that forms two stacked rings, 12 to 16 nm in diameter.

The protein resides in the cytoplasm. In terms of biological role, molecular chaperone; assists the folding of proteins upon ATP hydrolysis. Known to play a role, in vitro, in the folding of actin and tubulin. In yeast may play a role in mitotic spindle formation. The sequence is that of T-complex protein 1 subunit gamma (CCT3) from Saccharomyces cerevisiae (strain ATCC 204508 / S288c) (Baker's yeast).